A 2485-amino-acid polypeptide reads, in one-letter code: MYLEKYQEDDIAIIGVGLRLPGEESGGGVVGELLNDSPQNFWNNLKKGFNGISKTNERWSENYSKLGEISNGYAGVLPLEELKSFDPLFFGISPSEASTIDPQQRLLLKTTWESLEDAGIDHQSIRGSDCSVFIGSSTTEYRESIVNINEQYLNIFGTYAHGIANRISYCFDLRGESVTLDTACASSGTAISMGAQCIKNGKSKLSIVGGVNLIVDTTNIKAFSYLNMLSTSGVCRPFDIGADGLLRGEGVGTIVLKSLKDSIRDGNKIYCIIKGSSYNVDGNGNSDKQNFYAPSSISQSDNIKLAIKSTNGSITCDDIDYFECHGTGTPTGDPIETKGISMAFNRSKQNPLLIGSLKGSSGHSEAASGVIGVIKCCLIFKNKSLVPCVNFSKPNPQIKFEEWNLKVVTEPIPFTSLPSRKLNNKPISIAINNFGVTGANCCIILSEFINNNTNDNLKQINKSFLIPFSANSVKSLENYKLKLNSIINENDYYLNNSAIFNGFVNNQIYNKSKSLSQRSVYVASNLNELVDGKVNFKTSNSKSSNFSILKKKPIVLFVFSGQGSQYNTMFDQLYNDEIIFKESIDRIDNSLFKYYGYSVFEKFKSSNLNSIHEPLIAQAAISMLNISLFELYKHWGIEASFIVGHSLGEISAAHCSGMIDLETLCYIIYHRSIAQIKTHGNGRMLSINQSSDEYISKYSSKYADLEIACYNSQNSIVVAGNEHKLNQLFNELKENNEFATMIASQSSFHTSNQCITKDDIFKLQFTANLPLIPIFSTVTTNLFDNSTLFNSSYIYDNIICPVRFEQTISNFYKHIDDDNDKSDVEVVIIELAPHPTLSYYLKQMKPVIENKDIKVNVYSALHKLKNSTKEFQKVISQLYCDNGININFKCQLENQVNMYDTIFSLPNYQWDDQKYWKVDYTHSRSYINGPPITILGNESYNSPYLSRETYIDIKRNPFKYLNGHQIKMKIYFPGMGYIDNLLKLFKNNHKNIIIDQIEFIAPLILNEGINQCVQTNVNQIEINEYSLNCYYKDIKSNEWVKTCIGNFHISNNLFTQQRNYNINQLINEKCNYSLIERDDLYDMIKIKTGLNYSGDFKGINKCYIGNSCSLSEVSMNLPDNLPDKESFFNCTILDSCTHGFLVLIDYQCQLVFHKVEGLRYYNSNIPTDRNKHKNIYVYSILNQILNDSFHSSVIIMLEDGTVLIEIDNLISKSLTPIQDPLKIEYPMNELFSTHLQPKDSPFPLISMTFKSKFKNINEIKNEFMLNCCKNFISNQFLSNIINRTNIKLNEIKTLTIDQLVKLYCLYNNNERLFRFVFETIKKYDYNSNHSNNENEMVLKDDGIYQVLDTSIKVISKLLFPYENDKEDPITETPTSLFENGLLDKFYGTNNFMTTTIQRNLITDIIINSLKPILNQKLVIRIVELGGGVCSFTVDFLEKLDKLLKENPFHEIEIEFTWSDISSSFIPEAKKKLEPFSNNINIVYRSIDIEKEFKKQGLKHSYFDFIILTNVLHVVKNIGNSLDQLYKILSPNGQILLIEPYVSIVNDSIFGSFSQWWSFEDTEIRKTNCCMEPNSWLQVFKNHNFKNTNSYEEDGSCCYVIHSQKPPLLYGLNELKYTQSPNQIIIYGNENENENENENYTIKFNKSVIKISNIDQFNQSILNSQINNETIIYFTKSINQLDVNNFKFVTFEYIQINKLLLKYKLKSKHVLITLNSRDSNYLSASLVGAKRYFEEYPQLSLKAIDFDLQSLEEIKDIQSLLIELLDENKNTQNDYIIKNCQVYYERVKKEIISKSKFISNSFENNDSLITQLIDSEYKLTSNKPIFKVKEKEEGEEEVEIKVLSTTIGNVNDGDNFGEFSGIITRVCSNSNFKIGEKVYGFGYNTTSSHIVVNGDWIYYKPLNISNNNAASIPYKYLEVLYGLYNIGELDENENILIHLNNNINNNNNNISTLNILKWKGHKGLIYVTVDSNEMEIYVNDNFGGFISGVFILILKCLNSTSRIINFNYLNNNNNDNNDLEFFYKYCRKLNIGYHFIDLKKLIPIRRRGRIIKDLFKEISKAIENNEINLLPIIDYSNLNINHAIQMVKNEKNMVHTIVIENNEDVLENLLKEHSNNSTYSIIKSDYKISENHLGKNLIITGQIGVALEVLKWICKYSKGVENIIILSKSLIKWELKLLIDKTYNSKENNQIKFHFNTIDISNSNELTNTLNQLLKDTNIDNIDSIFHYAFTKVVSEVEDIDLNQLNLSHGAKTMGAINLHNESVNRCWNLKNFINASSTVTLAGSPGQCTYVCANSVLDSLSRYRKSIGLPSICSYYGSIKSGIVLRSESIATSLEKQGYVHVSMNKFLGALDLQIQNPNLSTNLIVSNFNFKLFKNNPQHSIIDKFEHQINENNSKLEISTNNNPSTSTESNKGIDGLLLSKVSELLSINETNFNADITLIDYGADSLITSQLKNFIEKEFSLSVTSQQLQRNSINQLIKFLNKK.

In terms of domain architecture, Ketosynthase family 3 (KS3) spans 8–447 (EDDIAIIGVG…GANCCIILSE (440 aa)). Residues cysteine 184, histidine 325, and histidine 363 each act as for beta-ketoacyl synthase activity in the active site. Residues 636 to 669 (GIEASFIVGHSLGEISAAHCSGMIDLETLCYIIY) are acyl/malonyl transferase. The active-site For acyl/malonyl transferase activity is serine 646. Residues 930–1054 (PPITILGNES…GNFHISNNLF (125 aa)) form an N-terminal hotdog fold region. The 291-residue stretch at 930 to 1220 (PPITILGNES…SKSLTPIQDP (291 aa)) folds into the PKS/mFAS DH domain. Histidine 964 acts as the Proton acceptor; for dehydratase activity in catalysis. Residues 1071-1220 (NYSLIERDDL…SKSLTPIQDP (150 aa)) form a C-terminal hotdog fold region. Aspartate 1134 (proton donor; for dehydratase activity) is an active-site residue. The 76-residue stretch at 2410-2485 (ESNKGIDGLL…NQLIKFLNKK (76 aa)) folds into the Carrier domain. O-(pantetheine 4'-phosphoryl)serine is present on serine 2447.

It depends on pantetheine 4'-phosphate as a cofactor.

Functionally, probable polyketide synthase. This Dictyostelium discoideum (Social amoeba) protein is Probable polyketide synthase 10 (pks10).